A 508-amino-acid chain; its full sequence is Tryptamine 4-monooxygenase (508 aa).

Positions 1 to 19 (MIAVLFSFVIAGCIYYIVS) are cleaved as a signal peptide. Cys439 lines the heme pocket.

It belongs to the cytochrome P450 family. Requires heme as cofactor.

The enzyme catalyses tryptamine + AH2 + O2 = 4-hydroxytryptamine + A + H2O. The protein operates within secondary metabolite biosynthesis. Cytochrome P450 monooxygenase; part of the gene cluster that mediates the biosynthesis of psilocybin, a psychotropic tryptamine-derived natural product. The first step in the pathway is the decarboxylation of L-tryptophan to tryptamine by the decarboxylase psiD. 4-hydroxy-L-tryptophan is accepted as substrate by psiD as well. The cytochrome P450 monooxygenase psiH then converts tryptamine to 4-hydroxytryptamine. The kinase psiK catalyzes the 4-O-phosphorylation step by converting 4-hydroxytryptamine into norbaeocystin. The methyltransferase psiM then catalyzes iterative methyl transfer to the amino group of norbaeocystin to yield psilocybin via a monomethylated intermediate, baeocystin. This chain is Tryptamine 4-monooxygenase, found in Psilocybe cubensis (Psychedelic mushroom).